A 210-amino-acid chain; its full sequence is Ribosomal RNA small subunit methyltransferase G (210 aa).

Residues Gly-80, Leu-85, 131-132, and Arg-146 contribute to the S-adenosyl-L-methionine site; that span reads VE.

Belongs to the methyltransferase superfamily. RNA methyltransferase RsmG family.

It localises to the cytoplasm. It catalyses the reaction guanosine(527) in 16S rRNA + S-adenosyl-L-methionine = N(7)-methylguanosine(527) in 16S rRNA + S-adenosyl-L-homocysteine. Its function is as follows. Specifically methylates the N7 position of guanine in position 527 of 16S rRNA. The sequence is that of Ribosomal RNA small subunit methyltransferase G from Pasteurella multocida (strain Pm70).